The following is a 278-amino-acid chain: DNA repair protein RecO (278 aa).

Residues 1–12 (MGTNDALTSTED) are compositionally biased toward polar residues. Positions 1 to 42 (MGTNDALTSTEDAVTAGANDAPLPAPPEPPRKARRATSRTSD) are disordered.

It belongs to the RecO family.

Its function is as follows. Involved in DNA repair and RecF pathway recombination. This chain is DNA repair protein RecO, found in Burkholderia lata (strain ATCC 17760 / DSM 23089 / LMG 22485 / NCIMB 9086 / R18194 / 383).